We begin with the raw amino-acid sequence, 624 residues long: Probable potassium transport system protein Kup 1 (624 aa).

Helical transmembrane passes span 10–30 (LALGALGVVFGDIGTSPLYAL), 48–68 (LSLIFWSLIIVVSFKYLMIIF), 94–114 (PLFYIVAIFGAGLLLGDGMLT), 133–153 (LYPYVLPIASLILILLFSLQA), 159–179 (IGYLFGPLILVWFITIAILGI), 210–230 (LLLGGIFLVVTGGEALFADIG), 242–262 (FFAALPCLLLNYFGQGANLIV), 270–290 (PFFMIAPSWFYLPLIIIATVA), 331–351 (IYVPQINFILFIGTMAFCLAF), 363–383 (IAVNLEMLLVDAMVAYAAISI), 388–408 (IFNVMFLFGLFLLIDLAFLGA), and 413–433 (FITGGWVPIVLAFFIAFIMYS).

This sequence belongs to the HAK/KUP transporter (TC 2.A.72) family.

Its subcellular location is the cell inner membrane. It catalyses the reaction K(+)(in) + H(+)(in) = K(+)(out) + H(+)(out). Its function is as follows. Transport of potassium into the cell. Likely operates as a K(+):H(+) symporter. In Legionella pneumophila (strain Lens), this protein is Probable potassium transport system protein Kup 1.